Consider the following 379-residue polypeptide: Oxidized polyvinyl alcohol hydrolase (379 aa).

Positions 1–23 are cleaved as a signal peptide; sequence MNQSLGVLRLTRGVIALALASVA. Residues S203 and S309 each act as charge relay system in the active site.

Belongs to the peptidase S9A family. As to quaternary structure, monomer.

It carries out the reaction nonane-4,6-dione + H2O = pentan-2-one + butanoate + H(+). Catalyzes the hydrolysis of 4,6-nonanedione, a beta-diketone compound. Also mediates hydrolysis of oxidized polyvinyl alcohol (PVA) in the second step in the degradation of polyvinyl alcohol. Not active toward the monoketone structure. The chain is Oxidized polyvinyl alcohol hydrolase (pvaB) from Pseudomonas sp.